We begin with the raw amino-acid sequence, 440 residues long: C-terminal-binding protein 1 (440 aa).

NAD(+)-binding positions include serine 100, 180–185, aspartate 204, 237–243, 264–266, and aspartate 290; these read IGLGRV, CGLNEHN, and TAR. Arginine 266 is a catalytic residue. Residue glutamate 295 is part of the active site. Catalysis depends on histidine 315, which acts as the Proton donor. Position 315–318 (315–318) interacts with NAD(+); the sequence is HAAW. The interval 409–440 is disordered; it reads HAHPAVAHPPHAPSPGQTIKPEADRDHPSDQL. Positions 429-440 are enriched in basic and acidic residues; it reads PEADRDHPSDQL.

It belongs to the D-isomer specific 2-hydroxyacid dehydrogenase family. NAD(+) serves as cofactor.

It localises to the nucleus. Functionally, corepressor targeting diverse transcription regulators. Has dehydrogenase activity. The chain is C-terminal-binding protein 1 (ctbp1) from Xenopus laevis (African clawed frog).